The following is a 393-amino-acid chain: Protein TsgA (393 aa).

Over methionine 1–threonine 10 the chain is Cytoplasmic. A helical transmembrane segment spans residues tryptophan 11 to methionine 31. The Periplasmic segment spans residues glycine 32–threonine 50. Residues phenylalanine 51–proline 71 form a helical membrane-spanning segment. Topologically, residues leucine 72–arginine 77 are cytoplasmic. A helical transmembrane segment spans residues phenylalanine 78–leucine 98. At phenylalanine 99 to serine 100 the chain is on the periplasmic side. Residues alanine 101 to isoleucine 121 form a helical membrane-spanning segment. At threonine 122 to arginine 133 the chain is on the cytoplasmic side. The helical transmembrane segment at leucine 134 to phenylalanine 154 threads the bilayer. Over leucine 155 to glutamate 161 the chain is Periplasmic. The chain crosses the membrane as a helical span at residues tryptophan 162 to glycine 182. Residues cysteine 183–glycine 205 are Cytoplasmic-facing. The helical transmembrane segment at isoleucine 206–isoleucine 226 threads the bilayer. Residues serine 227 to glycine 244 are Periplasmic-facing. The helical transmembrane segment at alanine 245–leucine 265 threads the bilayer. Residues arginine 266–arginine 272 are Cytoplasmic-facing. Residues isoleucine 273–glutamine 293 traverse the membrane as a helical segment. Residues alanine 294–proline 297 are Periplasmic-facing. Residues tryptophan 298–glycine 318 form a helical membrane-spanning segment. Over serine 319 to asparagine 331 the chain is Cytoplasmic. The helical transmembrane segment at phenylalanine 332–valine 352 threads the bilayer. The Periplasmic segment spans residues alanine 353–alanine 360. The helical transmembrane segment at leucine 361–valine 381 threads the bilayer. Over serine 382–histidine 393 the chain is Cytoplasmic.

Belongs to the major facilitator superfamily. TsgA family.

The protein localises to the cell inner membrane. The chain is Protein TsgA from Salmonella choleraesuis (strain SC-B67).